The sequence spans 426 residues: Histidine--tRNA ligase (426 aa).

This sequence belongs to the class-II aminoacyl-tRNA synthetase family.

It localises to the cytoplasm. It carries out the reaction tRNA(His) + L-histidine + ATP = L-histidyl-tRNA(His) + AMP + diphosphate + H(+). The protein is Histidine--tRNA ligase of Saccharolobus islandicus (strain Y.N.15.51 / Yellowstone #2) (Sulfolobus islandicus).